The primary structure comprises 92 residues: Bombyxin A-5 (92 aa).

Residues 1-19 form the signal peptide; the sequence is MKLLLAIALMLTTVMWAST. Residue Q20 is modified to Pyrrolidone carboxylic acid. Cystine bridges form between C29–C79, C41–C92, and C78–C83. A propeptide spans 50 to 71 (c peptide like); that stretch reads SDAQFASYGSAWLMPYSEGRDQ.

This sequence belongs to the insulin family. Heterodimer of a B chain and an A chain linked by two disulfide bonds.

Its subcellular location is the secreted. In terms of biological role, brain peptide responsible for activation of prothoracic glands to produce ecdysone in insects. The polypeptide is Bombyxin A-5 (BBXA5) (Bombyx mori (Silk moth)).